Reading from the N-terminus, the 255-residue chain is Large ribosomal subunit protein uL2 (255 aa).

The segment at 201–229 is disordered; the sequence is YAHPHGGGSHQQGGTPVKKNAPPGQKVGF.

Belongs to the universal ribosomal protein uL2 family. Part of the 50S ribosomal subunit. Forms a bridge to the 30S subunit in the 70S ribosome.

Functionally, one of the primary rRNA binding proteins. Required for association of the 30S and 50S subunits to form the 70S ribosome, for tRNA binding and peptide bond formation. It has been suggested to have peptidyltransferase activity; this is somewhat controversial. Makes several contacts with the 16S rRNA in the 70S ribosome. The protein is Large ribosomal subunit protein uL2 of Caldivirga maquilingensis (strain ATCC 700844 / DSM 13496 / JCM 10307 / IC-167).